Reading from the N-terminus, the 985-residue chain is Protein psiQ (985 aa).

An N-terminal signal peptide occupies residues 1–20 (MMKYIYILLIFSLLFLKINS). A PA14 domain is found at 102 to 247 (QSTTNPNVYA…YDECGVCQGD (146 aa)). 15 N-linked (GlcNAc...) asparagine glycosylation sites follow: N127, N309, N424, N491, N517, N527, N592, N620, N649, N696, N735, N767, N786, N824, and N842.

Belongs to the prespore-cell-inducing factor family.

The protein localises to the secreted. This Dictyostelium discoideum (Social amoeba) protein is Protein psiQ (psiQ).